Consider the following 510-residue polypeptide: NAD(P)H-quinone oxidoreductase subunit 2 B, chloroplastic (510 aa).

Transmembrane regions (helical) follow at residues 24 to 44 (LLLF…GLIL), 57 to 77 (IPWL…ALLF), 99 to 119 (IFQF…VEYI), 124 to 144 (MAIT…MFLC), 149 to 169 (LITI…LSGY), 183 to 203 (YLLM…WLYG), 227 to 247 (PGIS…LSLA), 295 to 315 (WHLL…LIAI), 323 to 343 (MLAY…IVGD), 354 to 374 (YMLF…LFGL), 395 to 415 (ALSL…AGFF), 418 to 438 (LHLF…IGLL), and 482 to 502 (LSMI…NPIV).

This sequence belongs to the complex I subunit 2 family. NDH is composed of at least 16 different subunits, 5 of which are encoded in the nucleus.

It localises to the plastid. It is found in the chloroplast thylakoid membrane. The catalysed reaction is a plastoquinone + NADH + (n+1) H(+)(in) = a plastoquinol + NAD(+) + n H(+)(out). It catalyses the reaction a plastoquinone + NADPH + (n+1) H(+)(in) = a plastoquinol + NADP(+) + n H(+)(out). In terms of biological role, NDH shuttles electrons from NAD(P)H:plastoquinone, via FMN and iron-sulfur (Fe-S) centers, to quinones in the photosynthetic chain and possibly in a chloroplast respiratory chain. The immediate electron acceptor for the enzyme in this species is believed to be plastoquinone. Couples the redox reaction to proton translocation, and thus conserves the redox energy in a proton gradient. The protein is NAD(P)H-quinone oxidoreductase subunit 2 B, chloroplastic of Manihot esculenta (Cassava).